The sequence spans 36 residues: Photosystem I reaction center subunit VIII (36 aa).

Residues 9 to 29 (ILTPVVTLVFPGLMFALFFVL) traverse the membrane as a helical segment.

It belongs to the PsaI family.

It is found in the plastid. Its subcellular location is the chloroplast thylakoid membrane. In terms of biological role, may help in the organization of the PsaL subunit. This chain is Photosystem I reaction center subunit VIII, found in Emiliania huxleyi (Coccolithophore).